A 239-amino-acid polypeptide reads, in one-letter code: 2,3,4,5-tetrahydropyridine-2,6-dicarboxylate N-acetyltransferase (239 aa).

The protein belongs to the transferase hexapeptide repeat family. DapH subfamily.

The catalysed reaction is (S)-2,3,4,5-tetrahydrodipicolinate + acetyl-CoA + H2O = L-2-acetamido-6-oxoheptanedioate + CoA. Its pathway is amino-acid biosynthesis; L-lysine biosynthesis via DAP pathway; LL-2,6-diaminopimelate from (S)-tetrahydrodipicolinate (acetylase route): step 1/3. In terms of biological role, catalyzes the transfer of an acetyl group from acetyl-CoA to tetrahydrodipicolinate. This Staphylococcus haemolyticus (strain JCSC1435) protein is 2,3,4,5-tetrahydropyridine-2,6-dicarboxylate N-acetyltransferase.